We begin with the raw amino-acid sequence, 445 residues long: Trigger factor (445 aa).

Residues 172 to 257 (GDQVVIDFVG…VKSVNWAHMP (86 aa)) form the PPIase FKBP-type domain.

Belongs to the FKBP-type PPIase family. Tig subfamily.

The protein resides in the cytoplasm. The enzyme catalyses [protein]-peptidylproline (omega=180) = [protein]-peptidylproline (omega=0). In terms of biological role, involved in protein export. Acts as a chaperone by maintaining the newly synthesized protein in an open conformation. Functions as a peptidyl-prolyl cis-trans isomerase. The polypeptide is Trigger factor (Polynucleobacter asymbioticus (strain DSM 18221 / CIP 109841 / QLW-P1DMWA-1) (Polynucleobacter necessarius subsp. asymbioticus)).